The sequence spans 372 residues: NAD(P)H-quinone oxidoreductase subunit 1 (372 aa).

The next 8 helical transmembrane spans lie at 27-47 (AIWMPLPMILMLIGATVGVLV), 97-117 (WLFTLGPIIVVIPVFLSFLIV), 128-148 (VGMGVFLWIALSSIQPIGLLM), 166-186 (AAQSISYEIPLALAVLAIAMM), 204-224 (ILGWNIWRQPIGFLIFWIAAL), 249-269 (YSGMKFGLFYLGSYVNLILSS), 308-328 (SLGITMTVFKAYLLVFVAILL), and 351-371 (VGLVNLLLTAALKLAFPFAFG).

Belongs to the complex I subunit 1 family. In terms of assembly, NDH-1 is composed of at least 11 different subunits.

It is found in the cellular thylakoid membrane. The catalysed reaction is a plastoquinone + NADH + (n+1) H(+)(in) = a plastoquinol + NAD(+) + n H(+)(out). It catalyses the reaction a plastoquinone + NADPH + (n+1) H(+)(in) = a plastoquinol + NADP(+) + n H(+)(out). NDH-1 shuttles electrons from an unknown electron donor, via FMN and iron-sulfur (Fe-S) centers, to quinones in the respiratory and/or the photosynthetic chain. The immediate electron acceptor for the enzyme in this species is believed to be plastoquinone. Couples the redox reaction to proton translocation, and thus conserves the redox energy in a proton gradient. The protein is NAD(P)H-quinone oxidoreductase subunit 1 of Nostoc punctiforme (strain ATCC 29133 / PCC 73102).